The primary structure comprises 150 residues: CCAAT/enhancer-binding protein gamma (150 aa).

Lysine 3 is covalently cross-linked (Glycyl lysine isopeptide (Lys-Gly) (interchain with G-Cter in SUMO2)). A disordered region spans residues 27–94; sequence GLQQVPQLVP…QKAQDTLQRV (68 aa). Positions 28–37 are enriched in low complexity; it reads LQQVPQLVPA. Residues 56 to 72 are compositionally biased toward basic and acidic residues; sequence SPMDRNSDEYRQRRERN. One can recognise a bZIP domain in the interval 62–125; it reads SDEYRQRRER…SVLKDLFLEH (64 aa). Residues 66-93 form a basic motif region; that stretch reads RQRRERNNMAVKKSRLKSKQKAQDTLQR. The interval 97-118 is leucine-zipper; the sequence is LKEENERLEAKIKLLTKELSVL.

Belongs to the bZIP family. C/EBP subfamily. In terms of assembly, binds DNA as a dimer and can form stable heterodimers with CEBPA and CEBPB. Interacts with ZNF638; this interaction increases transcriptional activation.

The protein resides in the nucleus. Transcription factor that binds to the promoter and the enhancer regions of target genes. Binds to the enhancer element PRE-I (positive regulatory element-I) of the IL-4 gene. Binds to the promoter and the enhancer of the immunoglobulin heavy chain. Binds to GPE1, a cis-acting element in the G-CSF gene promoter. The sequence is that of CCAAT/enhancer-binding protein gamma (CEBPG) from Homo sapiens (Human).